The chain runs to 2596 residues: Cadherin EGF LAG seven-pass G-type receptor fmi-1 (2596 aa).

The first 22 residues, 1 to 22 (MMLDRIMFLLFFILSLVIGSFS), serve as a signal peptide directing secretion. The Extracellular portion of the chain corresponds to 23 to 2229 (EYLDDKYYST…IVRVAQMDNM (2207 aa)). Cadherin domains lie at 166–270 (QQEK…SPIF), 271–375 (EKDS…APVF), 376–479 (ASDS…APTL), 480–581 (IAAQ…APTF), 582–682 (DKKE…APYF), 683–784 (NDHP…SPQF), 785–892 (TSSS…APTF), and 893–1000 (EQLS…KPAL). N381, N387, N562, N587, N765, and N824 each carry an N-linked (GlcNAc...) asparagine glycan. N-linked (GlcNAc...) asparagine glycosylation is found at N1030 and N1263. One can recognise an EGF-like 1 domain in the interval 1251–1287 (RIDECYRGRCSNNSTCVAFENTYQCECKPGWIGRHCE). Intrachain disulfides connect C1255–C1266, C1260–C1275, C1277–C1286, C1497–C1526, C1533–C1546, C1540–C1555, C1557–C1567, C1709–C1732, C1738–C1750, C1744–C1759, C1761–C1770, and C1780–C1785. The Laminin G-like 1 domain maps to 1333-1526 (SVSFDGEGLL…HKVGQVHEGC (194 aa)). In terms of domain architecture, EGF-like 2 spans 1529-1568 (RKDFCSTSDGQCSATSKCVNRWGGRICSCPQSVHSTGECV). A Laminin G-like 2 domain is found at 1577–1732 (RGHSLFEEES…KKKGKTRAGC (156 aa)). 2 consecutive EGF-like domains span residues 1734 to 1771 (VPNR…DTCL) and 1776 to 1808 (VANV…KNCQ). Residue N1789 is glycosylated (N-linked (GlcNAc...) asparagine). A disulfide bridge connects residues C1798 and C1807. 5 N-linked (GlcNAc...) asparagine glycosylation sites follow: N1965, N1992, N2152, N2195, and N2228. Residues 2054–2219 (EYSTLISKLW…TMFVNDQSSS (166 aa)) form the GAIN-B domain. An intrachain disulfide couples C2174 to C2201. A GPS region spans residues 2174-2219 (CVRFDEKSGTWTARGAALIGLNLTHAACEYNRIGVFTMFVNDQSSS). A helical membrane pass occupies residues 2230-2250 (TSPAIAGVALFLCFLSILLTL). The Cytoplasmic portion of the chain corresponds to 2251–2261 (SRRSLKTHSVR). The helical transmembrane segment at 2262–2282 (IGFILFFAINILNLFFVHKTA) threads the bilayer. Residues 2283 to 2292 (INQAYCPVRN) lie on the Extracellular side of the membrane. Residues 2293–2313 (AMLSFTSSAPFAWLFLYGLYI) traverse the membrane as a helical segment. Residues 2314–2326 (YRMLADGSSSPSL) lie on the Cytoplasmic side of the membrane. The chain crosses the membrane as a helical span at residues 2327 to 2347 (TTSLLVGIVFPCLISFTTFFV). Topologically, residues 2348–2356 (TDQCSLSPH) are extracellular. The helical transmembrane segment at 2357–2377 (LWLFWCIILPIGLFLLLSFYA) threads the bilayer. At 2378–2401 (AATSVLVSLHKKYDVFVAKYNVKR) the chain is on the cytoplasmic side. The helical transmembrane segment at 2402 to 2422 (AVFQHFILTIFTLGMTLTGLF) threads the bilayer. Residues 2423–2437 (ANQLPLPMEIMEISQ) are Extracellular-facing. Residues 2438 to 2458 (SIIYLIAALVIFLWCVCDITT) form a helical membrane-spanning segment. Residues 2459–2596 (KASDSNPSMW…KNTTSTFNRE (138 aa)) lie on the Cytoplasmic side of the membrane.

It belongs to the G-protein coupled receptor 2 family. LN-TM7 subfamily. Expressed in a region of neuropil around the nerve ring and the ventral cord (at protein level). Expressed in the head, tail, ventral cord, nerve ring and neurons including HSN neurons. Expressed in DA, VA, and VB and weakly in the DB cholinergic neurons. Not expressed in ventral D-type GABAergic motorneurons.

It localises to the cell membrane. Its subcellular location is the cell projection. The protein resides in the axon. It is found in the dendrite. Functionally, during ventral cord development, required for axon fasciculation and navigation, mediating both pioneer and follower axon extension, guidance and track formation. Acts in CEPsh glia and SubL neurons to guide follower axons into the nerve ring. Promotes motorneuron development by positively regulating the extension of the anterior neurite of ventral D-type GABAergic motorneurons along the anterior-posterior axis of the ventral nerve cord. Plays a role in synaptogenesis by regulating synaptic vesicle accumulation at GABAergic and cholinergic neuromuscular junctions. The chain is Cadherin EGF LAG seven-pass G-type receptor fmi-1 from Caenorhabditis elegans.